A 397-amino-acid polypeptide reads, in one-letter code: Tryptophan synthase beta chain (397 aa).

An N6-(pyridoxal phosphate)lysine modification is found at lysine 87.

It belongs to the TrpB family. In terms of assembly, tetramer of two alpha and two beta chains. The cofactor is pyridoxal 5'-phosphate.

The enzyme catalyses (1S,2R)-1-C-(indol-3-yl)glycerol 3-phosphate + L-serine = D-glyceraldehyde 3-phosphate + L-tryptophan + H2O. It participates in amino-acid biosynthesis; L-tryptophan biosynthesis; L-tryptophan from chorismate: step 5/5. In terms of biological role, the beta subunit is responsible for the synthesis of L-tryptophan from indole and L-serine. In Salmonella agona (strain SL483), this protein is Tryptophan synthase beta chain.